We begin with the raw amino-acid sequence, 157 residues long: MSRRHAAEKKVIPGDPVYGSVVLERFINKVMLHGKKSIARKIVYGALERFAKRLGLENPLEGFEEALENAKPILEVRSRRVGGATYQVPVEVAPDRRSCLAMQWIIKHARSKPGKCMEVGLANELIDCFNKQGATIKKREDTHRMAEANKAFAHYKW.

Belongs to the universal ribosomal protein uS7 family. Part of the 30S ribosomal subunit. Contacts proteins S9 and S11.

In terms of biological role, one of the primary rRNA binding proteins, it binds directly to 16S rRNA where it nucleates assembly of the head domain of the 30S subunit. Is located at the subunit interface close to the decoding center, probably blocks exit of the E-site tRNA. This Chlamydia trachomatis serovar L2 (strain ATCC VR-902B / DSM 19102 / 434/Bu) protein is Small ribosomal subunit protein uS7.